We begin with the raw amino-acid sequence, 548 residues long: MNRAENLDSIPTDLILEIFSRMSTKSIGRCRCVSKLWKSMLGHPYFTELFLTRSSDHPRLLFGVKRERQWLFFSSPQPQDLYEKSSLVDFHMNFSDFHMNFSGDIRRNECTYVSGFIYFPRKRIKNYLCDFRVICNPITGQYAILQLITFHEKRSFLGFDPIDKQFKVLRMKYNDRGIVVHHILTLEPGKMRWRKIRCPLAHEPFWEEICANGVLYYLAEPTDGGSYVICCFDVRSEKFKFIDAKCFGDFSIQLINYKGKLGGISWKYDTVDGKRTVELYMWVLEDVEKQKWSKYVYPLPGNSYHYSVAGVTAKGDIVFVKTYTSKPFYVFYVNPEKKTFQRVEIHGNHEVFDTNNLVYAFVDHVEDLQFDVMKKTYAAKPISPPKQKPKPPSTETSSREDHQGWISISSRKYHQVRTIAHRQQGRRKFESINKFNALYLDDGDEDTVAHQQRDHHTFKSISKFKAQRLLDDDEFTGVKTSKCDTSHLQNRVTAVHELHIWSITVGKVSLASQVSIKPEADTDAILDKVIEYIKRHHVTIQVEKEQNP.

In terms of domain architecture, F-box spans alanine 4–arginine 53. Positions lysine 380–glycine 404 are disordered. Residues isoleucine 382–proline 392 are compositionally biased toward pro residues.

The sequence is that of Putative F-box protein At1g33020 from Arabidopsis thaliana (Mouse-ear cress).